The primary structure comprises 454 residues: Chromosomal replication initiator protein DnaA (454 aa).

A domain I, interacts with DnaA modulators region spans residues 1-74 (MFDLEKFWDS…IQSAYAYAGI (74 aa)). Residues 74-116 (IDIYPVFVVKNGPTPSSERMLEPQPQAKPEKARPQGREFTKDL) are domain II. The segment at 88-112 (PSSERMLEPQPQAKPEKARPQGREF) is disordered. The span at 101-112 (KPEKARPQGREF) shows a compositional bias: basic and acidic residues. The segment at 117 to 333 (RLNEKYTFEN…GALVKVQAQA (217 aa)) is domain III, AAA+ region. ATP is bound by residues glycine 161, glycine 163, lysine 164, and threonine 165. A domain IV, binds dsDNA region spans residues 334-454 (TIQKQDINIG…VSDLRQMLER (121 aa)).

It belongs to the DnaA family. In terms of assembly, oligomerizes as a right-handed, spiral filament on DNA at oriC.

The protein localises to the cytoplasm. Functionally, plays an essential role in the initiation and regulation of chromosomal replication. ATP-DnaA binds to the origin of replication (oriC) to initiate formation of the DNA replication initiation complex once per cell cycle. Binds the DnaA box (a 9 base pair repeat at the origin) and separates the double-stranded (ds)DNA. Forms a right-handed helical filament on oriC DNA; dsDNA binds to the exterior of the filament while single-stranded (ss)DNA is stabiized in the filament's interior. The ATP-DnaA-oriC complex binds and stabilizes one strand of the AT-rich DNA unwinding element (DUE), permitting loading of DNA polymerase. After initiation quickly degrades to an ADP-DnaA complex that is not apt for DNA replication. Binds acidic phospholipids. This Lactobacillus delbrueckii subsp. bulgaricus (strain ATCC 11842 / DSM 20081 / BCRC 10696 / JCM 1002 / NBRC 13953 / NCIMB 11778 / NCTC 12712 / WDCM 00102 / Lb 14) protein is Chromosomal replication initiator protein DnaA.